We begin with the raw amino-acid sequence, 39 residues long: uncharacterized protein (39 aa).

A helical membrane pass occupies residues 18 to 38 (AIKVIALVVLITISAVVYLSV).

It localises to the membrane. This is an uncharacterized protein from Enterobacteriaceae (Bacteriophage Mu).